The sequence spans 575 residues: Thrombomodulin (575 aa).

Positions 1-18 are cleaved as a signal peptide; the sequence is MLGVLVLGALALAGLGFP. At 19 to 515 the chain is on the extracellular side; sequence APAEPQPGGS…TPPAVGLVHS (497 aa). The C-type lectin domain maps to 31–169; sequence VEHDCFALYP…VKADGFLCEF (139 aa). N47, N115, and N116 each carry an N-linked (GlcNAc...) asparagine glycan. 19 cysteine pairs are disulfide-bonded: C137-C158, C245-C256, C252-C265, C267-C280, C288-C296, C292-C308, C310-C323, C329-C340, C336-C349, C351-C362, C369-C378, C374-C388, C390-C404, C408-C413, C417-C425, C427-C439, C445-C455, C451-C464, and C466-C480. 2 consecutive EGF-like domains span residues 241–281 and 284–324; these read GAWD…RSCT and ATQS…HRCE. Positions 325–363 constitute an EGF-like 3; calcium-binding domain; the sequence is DVDDCILEPSPCPQRCVNTQGGFECHCYPNYDLVDGECV. N342 carries the (3R)-3-hydroxyasparagine modification. 2 consecutive EGF-like domains span residues 365 to 405 and 404 to 440; these read PVDP…HRCQ and CQMF…FICT. An N-linked (GlcNAc...) asparagine glycan is attached at N382. N-linked (GlcNAc...) asparagine glycosylation is present at N409. Positions 441–481 constitute an EGF-like 6; calcium-binding domain; sequence DIDECENGGFCSGVCHNLPGTFECICGPDSALARHIGTDCD. The interval 481-515 is involved in alpha-L/beta-2 and alpha-M/beta-2 integrin binding; it reads DSGKVDGGDSGSGEPPPSPTPGSTLTPPAVGLVHS. Residues 484 to 506 form a disordered region; that stretch reads KVDGGDSGSGEPPPSPTPGSTLT. S490 and S492 each carry an O-linked (Xyl...) (chondroitin sulfate) serine glycan. The chain crosses the membrane as a helical span at residues 516 to 539; that stretch reads GLLIGISIASLCLVVALLALLCHL. Residues 540–575 lie on the Cytoplasmic side of the membrane; it reads RKKQGAARAKMEYKCAAPSKEVVLQHVRTERTPQRL.

As to quaternary structure, interacts with ITGAL, ITGAM and ITGB2. Interacts with thrombin/F2; this interaction switches the specificity of thrombin from a procoagulant to an anticoagulant and antifibrinolytic protease. Interacts with ANGP1 and ANGP2; these interactions significantly inhibit the generation of activated PC and TAFIa/CPB2 by the thrombin/thrombomodulin complex. Interacts with PF4; this interaction enhances generation of activated protein C. Interacts with HMGB1; this interaction inhibits HMGB1 inflammatory activity. Post-translationally, N-glycosylated. The iron and 2-oxoglutarate dependent 3-hydroxylation of aspartate and asparagine is (R) stereospecific within EGF domains. In terms of tissue distribution, endothelial cells are unique in synthesizing thrombomodulin.

Its subcellular location is the membrane. In terms of biological role, endothelial cell receptor that plays a critical role in regulating several physiological processes including hemostasis, coagulation, fibrinolysis, inflammation, and angiogenesis. Acts as a cofactor for thrombin activation of protein C/PROC on the surface of vascular endothelial cells leading to initiation of the activated protein C anticoagulant pathway. Also accelerates the activation of the plasma carboxypeptidase B2/CPB2, which catalyzes removal of C-terminal basic amino acids from its substrates including kinins or anaphylatoxins leading to fibrinolysis inhibition. Plays critical protective roles in changing the cleavage specificity of protease-activated receptor 1/PAR1, inhibiting endothelial cell permeability and inflammation. Suppresses inflammation distinctly from its anticoagulant cofactor activity by sequestering HMGB1 thereby preventing it from engaging cellular receptors such as RAGE and contributing to the inflammatory response. This is Thrombomodulin (THBD) from Homo sapiens (Human).